A 677-amino-acid polypeptide reads, in one-letter code: WD and tetratricopeptide repeats protein 1 (677 aa).

WD repeat units lie at residues 45-84, 88-129, 132-172, 182-222, and 265-305; these read GHSGCVNCLEWNEKGDLLASGSDDQHTIVWDPLHHKKLLS, GHTA…TIHM, DHTN…KHSE, GPMV…NHRK, and RLRV…RPYT. A Phosphoserine modification is found at serine 352. TPR repeat units follow at residues 361-394 and 396-431; these read LERVKQQANEAFACQQWTQAIQLYSQAVQKAPHN and MLYGNRAAAYMKRKWDGDHYDALRDCLKAISLNPCH. The segment at 489-509 is disordered; that stretch reads EEKKAAGGGGGPVRLRSTSRK. Phosphoserine is present on serine 511. 2 WD repeats span residues 535 to 575 and 578 to 617; these read NTTT…LVRV and GDESIVNCLQPHPSYCFLATSGIDPVVRLWNPRPESEDLT. Residues 655 to 677 are disordered; it reads SSGGAGASDDEDSAEGQVQCRPS.

It participates in protein modification; protein ubiquitination. Functionally, may function as a substrate receptor for CUL4-DDB1 E3 ubiquitin-protein ligase complex. The sequence is that of WD and tetratricopeptide repeats protein 1 (Wdtc1) from Mus musculus (Mouse).